The chain runs to 91 residues: Acylphosphatase (91 aa).

Residues 5–91 (CSKFIVSGHV…EHDYQGFEIL (87 aa)) form the Acylphosphatase-like domain. Residues Arg20 and Asn38 contribute to the active site.

The protein belongs to the acylphosphatase family.

The enzyme catalyses an acyl phosphate + H2O = a carboxylate + phosphate + H(+). The chain is Acylphosphatase (acyP) from Vibrio cholerae serotype O1 (strain ATCC 39315 / El Tor Inaba N16961).